The primary structure comprises 281 residues: Very-long-chain (3R)-3-hydroxyacyl-CoA dehydratase 1 (281 aa).

Over 1–68 the chain is Cytoplasmic; the sequence is MGKGDWRQGR…RRLGLLATAW (68 aa). A helical membrane pass occupies residues 69–88; the sequence is LTFYNIAMTAGWLVLAIAMV. Over 89–107 the chain is Lumenal; sequence RFYMEKGTHRGLYKSIQKT. The chain crosses the membrane as a helical span at residues 108–124; the sequence is LKFFQTFALLEVVHCLI. Over 125–134 the chain is Cytoplasmic; the sequence is GIVPTSVLVT. The helical transmembrane segment at 135–152 threads the bilayer; sequence GVQVSSRIFMVWLITHSI. At 153-158 the chain is on the lumenal side; the sequence is KPIQNE. A helical membrane pass occupies residues 159–173; that stretch reads ESVVLFLVSWTVTEI. The Cytoplasmic segment spans residues 174-196; the sequence is TRYSFYTFSLLDHLPHFIKWARY. The chain crosses the membrane as a helical span at residues 197 to 214; it reads NLFIILYPVGVAGELLTI. Active-site residues include tyrosine 203 and glutamate 210. Topologically, residues 215–244 are lumenal; it reads YAALPYVKKSGMFSVRLPNKYNVSFDYYYF. An N-linked (GlcNAc...) asparagine glycan is attached at asparagine 236. A helical membrane pass occupies residues 245 to 262; the sequence is LLITMASYIPLFPQLYFH. The Cytoplasmic segment spans residues 263-281; sequence MLRQRRKVLHGEVIAEKDD.

This sequence belongs to the very long-chain fatty acids dehydratase HACD family. May interact with enzymes of the ELO family (including ELOVL1); with those enzymes that mediate condensation, the first of the four steps of the reaction cycle responsible for fatty acids elongation, may be part of a larger fatty acids elongase complex. Interacts with TECR. N-glycosylated. In terms of tissue distribution, expressed at high levels in heart, skeletal muscle and testis, weak expression in kidney and liver.

The protein resides in the endoplasmic reticulum membrane. It catalyses the reaction a very-long-chain (3R)-3-hydroxyacyl-CoA = a very-long-chain (2E)-enoyl-CoA + H2O. The catalysed reaction is (3R)-hydroxyhexadecanoyl-CoA = (2E)-hexadecenoyl-CoA + H2O. The enzyme catalyses (3R)-hydroxyoctadecanoyl-CoA = (2E)-octadecenoyl-CoA + H2O. It carries out the reaction (3R)-hydroxyeicosanoyl-CoA = (2E)-eicosenoyl-CoA + H2O. It catalyses the reaction (3R)-hydroxydocosanoyl-CoA = (2E)-docosenoyl-CoA + H2O. The catalysed reaction is (3R)-hydroxytetracosanoyl-CoA = (2E)-tetracosenoyl-CoA + H2O. The enzyme catalyses (3R)-hydroxyhexacosanoyl-CoA = (2E)-hexacosenoyl-CoA + H2O. The protein operates within lipid metabolism; fatty acid biosynthesis. In Mus musculus (Mouse), this protein is Very-long-chain (3R)-3-hydroxyacyl-CoA dehydratase 1.